The chain runs to 222 residues: Translation initiation factor 6 (222 aa).

Belongs to the eIF-6 family.

In terms of biological role, binds to the 50S ribosomal subunit and prevents its association with the 30S ribosomal subunit to form the 70S initiation complex. The polypeptide is Translation initiation factor 6 (Methanocorpusculum labreanum (strain ATCC 43576 / DSM 4855 / Z)).